A 116-amino-acid polypeptide reads, in one-letter code: Spexin (116 aa).

The N-terminal stretch at 1 to 26 is a signal peptide; that stretch reads MKGPSVLAVTAVVLLLVLSALENSSG. The propeptide occupies 27-35; the sequence is APQRLSEKR. Q49 carries the glutamine amide modification. 2 propeptides span residues 50–116 and 74–116; these read GRRF…LFNW and PDLE…LFNW. The interval 52–77 is disordered; the sequence is RFLSDQSRRKELADRPPPERRNPDLE. Positions 53–75 are enriched in basic and acidic residues; sequence FLSDQSRRKELADRPPPERRNPD.

The protein belongs to the spexin family.

The protein resides in the secreted. It is found in the extracellular space. The protein localises to the cytoplasmic vesicle. Its subcellular location is the secretory vesicle. In terms of biological role, plays a role as a central modulator of cardiovascular and renal function and nociception. Also plays a role in energy metabolism and storage. Inhibits adrenocortical cell proliferation with minor stimulation on corticosteroid release. Functionally, acts as a ligand for galanin receptors GALR2 and GALR3. Intracerebroventricular administration of the peptide induces an increase in arterial blood pressure, a decrease in both heart rate and renal excretion and delayed natriuresis. Intraventricular administration of the peptide induces antinociceptive activity. Also induces contraction of muscarinic-like stomach smooth muscles. Intraperitoneal administration of the peptide induces a reduction in food consumption and body weight. Inhibits long chain fatty acid uptake into adipocytes. Its function is as follows. Intracerebroventricular administration of the peptide induces a decrease in heart rate, but no change in arterial pressure, and an increase in urine flow rate. Intraventricular administration of the peptide induces antinociceptive activity. The polypeptide is Spexin (Spx) (Mus musculus (Mouse)).